A 598-amino-acid polypeptide reads, in one-letter code: Integrator complex subunit 11 (598 aa).

Positions 68, 70, 72, 73, 157, and 178 each coordinate Zn(2+). Positions 68-73 (HFHLDH) match the HXHXDH motif motif. The active site involves Glu-203. Residue His-414 coordinates Zn(2+). A Nuclear localization signal motif is present at residues 470–480 (PLPDAKRPRTM).

The protein belongs to the metallo-beta-lactamase superfamily. RNA-metabolizing metallo-beta-lactamase-like family. INTS11 subfamily. In terms of assembly, component of the Integrator complex, composed of core subunits INTS1, INTS2, INTS3, INTS4, INTS5, INTS6, INTS7, INTS8, INTS9/RC74, INTS10, INTS11/CPSF3L, INTS12, INTS13, INTS14 and INTS15. The core complex associates with protein phosphatase 2A subunits PPP2CA and PPP2R1A, to form the Integrator-PP2A (INTAC) complex. INTS11 is part of the RNA endonuclease subcomplex, composed of INTS4, INTS9, INTS11 and inositol hexakisphosphate (InsP6). Zn(2+) serves as cofactor.

Its subcellular location is the nucleus. It localises to the cytoplasm. Its function is as follows. RNA endonuclease component of the integrator complex, a multiprotein complex that terminates RNA polymerase II (Pol II) transcription in the promoter-proximal region of genes. The integrator complex provides a quality checkpoint during transcription elongation by driving premature transcription termination of transcripts that are unfavorably configured for transcriptional elongation: the complex terminates transcription by (1) catalyzing dephosphorylation of the C-terminal domain (CTD) of Pol II subunit POLR2A/RPB1 and SUPT5H/SPT5, (2) degrading the exiting nascent RNA transcript via endonuclease activity and (3) promoting the release of Pol II from bound DNA. The integrator complex is also involved in terminating the synthesis of non-coding Pol II transcripts, such as enhancer RNAs (eRNAs), small nuclear RNAs (snRNAs), telomerase RNAs and long non-coding RNAs (lncRNAs). Within the integrator complex, INTS11 constitutes the RNA endonuclease subunit that degrades exiting nascent RNA transcripts. In Danio rerio (Zebrafish), this protein is Integrator complex subunit 11 (cpsf3l).